The primary structure comprises 228 residues: Vacuolar-sorting protein snf7 (228 aa).

2 coiled-coil regions span residues 25 to 94 (ILGL…QINA) and 125 to 226 (EKVD…QAEM).

This sequence belongs to the SNF7 family. As to quaternary structure, a component of the endosomal sorting required for transport complex III (ESCRT-III).

It localises to the cytoplasm. Its subcellular location is the endosome membrane. Functionally, required for the sorting and concentration of proteins resulting in the entry of these proteins into the invaginating vesicles of the multivesicular body (MVB). Also required for the proteolytic cleavage of the transcription factor pacc-1 in response to alkaline ambient pH. This chain is Vacuolar-sorting protein snf7 (vsp-3), found in Neurospora crassa (strain ATCC 24698 / 74-OR23-1A / CBS 708.71 / DSM 1257 / FGSC 987).